The primary structure comprises 250 residues: Kv channel-interacting protein 4 (250 aa).

A KIS region spans residues 2–44 (NVRRVESISAQLEEASSTGGFLYAQNSTKRSIKERLMKLLPCS). Phosphoserine is present on residues S17 and S56. In terms of domain architecture, EF-hand 1; degenerate spans 61-117 (LEMATVRHRPEALELLEAQSKFTKKELQILYRGFKNECPSGVVNEETFKEIYSQFFP). EF-hand domains lie at 120-155 (DSTTYAHFLFNAFDTDHNGAVSFEDFIKGLSILLRG), 156-191 (TVQEKLNWAFNLYDINKDGYITKEEMLDIMKAIYDM), and 204-239 (APRQHVETFFQKMDKNKDGVVTIDEFIESCQKDENI). The Ca(2+) site is built by D133, D135, N137, D144, D169, N171, D173, Y175, E180, D217, N219, D221, and E228. Positions 237–250 (ENIMRSMQLFENVI) are interaction with KCND2.

The protein belongs to the recoverin family. As to quaternary structure, component of heteromultimeric potassium channels. Identified in potassium channel complexes containing KCND1, KCND2, KCND3, KCNIP1, KCNIP2, KCNIP3, KCNIP4, DPP6 and DPP10. Interacts with KCND2. Interacts with KCND3. Interacts with the C-terminus of PSEN2 and probably PSEN1.

The protein resides in the cell membrane. It localises to the cytoplasm. It is found in the peroxisome. Functionally, regulatory subunit of Kv4/D (Shal)-type voltage-gated rapidly inactivating A-type potassium channels. Modulates KCND2 channel density, inactivation kinetics and rate of recovery from inactivation in a calcium-dependent and isoform-specific manner. Modulates KCND3/Kv4.3 currents. Isoform 4 does not increase KCND2 expression at the cell membrane. Isoform 4 retains KCND3 in the endoplasmic reticulum and negatively regulates its expression at the cell membrane. This is Kv channel-interacting protein 4 (KCNIP4) from Macaca fascicularis (Crab-eating macaque).